The following is a 496-amino-acid chain: Probable cytosol aminopeptidase (496 aa).

Mn(2+) is bound by residues Lys264 and Asp269. Lys276 is a catalytic residue. Residues Asp287, Asp346, and Glu348 each contribute to the Mn(2+) site. Arg350 is an active-site residue.

It belongs to the peptidase M17 family. It depends on Mn(2+) as a cofactor.

The protein resides in the cytoplasm. It carries out the reaction Release of an N-terminal amino acid, Xaa-|-Yaa-, in which Xaa is preferably Leu, but may be other amino acids including Pro although not Arg or Lys, and Yaa may be Pro. Amino acid amides and methyl esters are also readily hydrolyzed, but rates on arylamides are exceedingly low.. The catalysed reaction is Release of an N-terminal amino acid, preferentially leucine, but not glutamic or aspartic acids.. Presumably involved in the processing and regular turnover of intracellular proteins. Catalyzes the removal of unsubstituted N-terminal amino acids from various peptides. The polypeptide is Probable cytosol aminopeptidase (Geobacter sulfurreducens (strain ATCC 51573 / DSM 12127 / PCA)).